The chain runs to 62 residues: Photosystem II reaction center protein Z (62 aa).

The next 2 membrane-spanning stretches (helical) occupy residues 8–28 (AVFA…VVFA) and 41–61 (FSGT…NSLI).

Belongs to the PsbZ family. PSII is composed of 1 copy each of membrane proteins PsbA, PsbB, PsbC, PsbD, PsbE, PsbF, PsbH, PsbI, PsbJ, PsbK, PsbL, PsbM, PsbT, PsbY, PsbZ, Psb30/Ycf12, at least 3 peripheral proteins of the oxygen-evolving complex and a large number of cofactors. It forms dimeric complexes.

It is found in the plastid. The protein localises to the chloroplast thylakoid membrane. Functionally, may control the interaction of photosystem II (PSII) cores with the light-harvesting antenna, regulates electron flow through the 2 photosystem reaction centers. PSII is a light-driven water plastoquinone oxidoreductase, using light energy to abstract electrons from H(2)O, generating a proton gradient subsequently used for ATP formation. The polypeptide is Photosystem II reaction center protein Z (Jasminum nudiflorum (Winter jasmine)).